A 559-amino-acid chain; its full sequence is Cytochrome P450 86B1 (559 aa).

The chain crosses the membrane as a helical span at residues 31 to 51; the sequence is FLLRDVQILELLIAIFVFVAI. Cysteine 488 is a heme binding site.

Belongs to the cytochrome P450 family. Requires heme as cofactor. As to expression, expressed in roots endodermis, anthers, stigmas, stomata of young pedicels of inflorescences, the placenta region of siliques, at the level of the hilum in matures seeds, at the junction of siliques to pedicels where abscission of floral parts takes place and in nectary glands.

It is found in the endoplasmic reticulum membrane. Involved in very long chain fatty acids (VLCFA) omega-hydroxylation. Required for the synthesis of saturated VLCFA alpha, omega-bifunctional suberin monomers. In Arabidopsis thaliana (Mouse-ear cress), this protein is Cytochrome P450 86B1 (CYP86B1).